A 1934-amino-acid chain; its full sequence is Pyruvate dehydrogenase [NADP(+)] (1934 aa).

4Fe-4S ferredoxin-type domains lie at 710–739 (SIPI…PFLL) and 767–796 (YRIQ…MEGL). [4Fe-4S] cluster is bound by residues Cys719, Cys722, Cys725, Cys729, Cys776, Cys779, Cys782, and Cys786. Residues 1288–1438 (MHVLYGTETG…ELIEWLPDYL (151 aa)) enclose the Flavodoxin-like domain. In terms of domain architecture, FAD-binding FR-type spans 1501-1759 (PNSVLLPVIE…NIKASAFNLP (259 aa)). FAD is bound by residues 1542–1553 (YCLGDSLALYGQ) and 1685–1695 (IKSRSYSIASC).

In the N-terminal section; belongs to the pyruvate:ferredoxin/flavodoxin oxidoreductase family. As to quaternary structure, homodimer. FAD is required as a cofactor. It depends on FMN as a cofactor. Thiamine diphosphate serves as cofactor.

The enzyme catalyses pyruvate + NADP(+) + CoA = acetyl-CoA + CO2 + NADPH. Functionally, may have an important role in respiratory metabolism. Cryptosporidium have a relic mitochondrion with no function in energy metabolism so it is not known if PFOR has a function. The protein is Pyruvate dehydrogenase [NADP(+)] (PFOR) of Cryptosporidium parvum.